A 299-amino-acid polypeptide reads, in one-letter code: Probable 3-hydroxyisobutyrate dehydrogenase-like 2, mitochondrial (299 aa).

NAD(+) is bound by residues 14–43 (TRIG…TVYA) and Ser108. Lys182 is an active-site residue. Residue Lys250 coordinates NAD(+).

It belongs to the HIBADH-related family. 3-hydroxyisobutyrate dehydrogenase subfamily.

It is found in the mitochondrion. The catalysed reaction is 3-hydroxy-2-methylpropanoate + NAD(+) = 2-methyl-3-oxopropanoate + NADH + H(+). It participates in amino-acid degradation; L-valine degradation. The protein is Probable 3-hydroxyisobutyrate dehydrogenase-like 2, mitochondrial of Arabidopsis thaliana (Mouse-ear cress).